The chain runs to 49 residues: Large ribosomal subunit protein bL33 (49 aa).

It belongs to the bacterial ribosomal protein bL33 family.

The chain is Large ribosomal subunit protein bL33 from Moorella thermoacetica (strain ATCC 39073 / JCM 9320).